The following is a 230-amino-acid chain: Orotidine 5'-phosphate decarboxylase (230 aa).

Substrate is bound by residues aspartate 9, lysine 31, 58-67 (DLKFFDIPNT), threonine 120, arginine 180, glutamine 188, glycine 208, and arginine 209. The active-site Proton donor is the lysine 60.

This sequence belongs to the OMP decarboxylase family. Type 1 subfamily. As to quaternary structure, homodimer.

The catalysed reaction is orotidine 5'-phosphate + H(+) = UMP + CO2. The protein operates within pyrimidine metabolism; UMP biosynthesis via de novo pathway; UMP from orotate: step 2/2. Catalyzes the decarboxylation of orotidine 5'-monophosphate (OMP) to uridine 5'-monophosphate (UMP). The polypeptide is Orotidine 5'-phosphate decarboxylase (Maridesulfovibrio salexigens (strain ATCC 14822 / DSM 2638 / NCIMB 8403 / VKM B-1763) (Desulfovibrio salexigens)).